We begin with the raw amino-acid sequence, 290 residues long: 4-diphosphocytidyl-2-C-methyl-D-erythritol kinase (290 aa).

K12 is an active-site residue. ATP is bound at residue 97-107; the sequence is PVASGIGGGSA. The active site involves D139.

It belongs to the GHMP kinase family. IspE subfamily.

The enzyme catalyses 4-CDP-2-C-methyl-D-erythritol + ATP = 4-CDP-2-C-methyl-D-erythritol 2-phosphate + ADP + H(+). The protein operates within isoprenoid biosynthesis; isopentenyl diphosphate biosynthesis via DXP pathway; isopentenyl diphosphate from 1-deoxy-D-xylulose 5-phosphate: step 3/6. Functionally, catalyzes the phosphorylation of the position 2 hydroxy group of 4-diphosphocytidyl-2C-methyl-D-erythritol. The chain is 4-diphosphocytidyl-2-C-methyl-D-erythritol kinase from Parvibaculum lavamentivorans (strain DS-1 / DSM 13023 / NCIMB 13966).